The chain runs to 819 residues: Lon protease (819 aa).

The span at 1–14 (MNSTNNTDSQNLDP) shows a compositional bias: polar residues. Positions 1-41 (MNSTNNTDSQNLDPNASEVEKLLDESAEAEEKTDDHTPPSE) are disordered. Basic and acidic residues predominate over residues 18–38 (EVEKLLDESAEAEEKTDDHTP). Residues 42–239 (LFILPLNKRP…KALVLLKKEL (198 aa)) enclose the Lon N-terminal domain. 392–399 (GPPGVGKT) provides a ligand contact to ATP. The region spanning 634–818 (KTPVGVATGL…DDVFKIAFPG (185 aa)) is the Lon proteolytic domain. Catalysis depends on residues Ser-724 and Lys-767.

The protein belongs to the peptidase S16 family. As to quaternary structure, homohexamer. Organized in a ring with a central cavity.

It is found in the cytoplasm. It catalyses the reaction Hydrolysis of proteins in presence of ATP.. Functionally, ATP-dependent serine protease that mediates the selective degradation of mutant and abnormal proteins as well as certain short-lived regulatory proteins. Required for cellular homeostasis and for survival from DNA damage and developmental changes induced by stress. Degrades polypeptides processively to yield small peptide fragments that are 5 to 10 amino acids long. Binds to DNA in a double-stranded, site-specific manner. The protein is Lon protease of Chlamydia muridarum (strain MoPn / Nigg).